We begin with the raw amino-acid sequence, 465 residues long: Probable protein phosphatase 2C 71 (465 aa).

Disordered stretches follow at residues 14 to 47 (RPCK…ACRA), 68 to 119 (RPRD…GEVT), and 133 to 191 (SGGA…PAEE). The segment covering 18-30 (LAPPPPPPLPVSP) has biased composition (pro residues). 2 stretches are compositionally biased toward low complexity: residues 84-106 (AVAP…AAAE) and 133-143 (SGGAEATATSG). Residues 222–460 (ASGAAILPHP…DDIAVVVSIV (239 aa)) form the PPM-type phosphatase domain. Positions 254, 255, 384, and 451 each coordinate Mn(2+).

The protein belongs to the PP2C family. Requires Mg(2+) as cofactor. It depends on Mn(2+) as a cofactor.

It carries out the reaction O-phospho-L-seryl-[protein] + H2O = L-seryl-[protein] + phosphate. It catalyses the reaction O-phospho-L-threonyl-[protein] + H2O = L-threonyl-[protein] + phosphate. This is Probable protein phosphatase 2C 71 from Oryza sativa subsp. japonica (Rice).